The chain runs to 319 residues: rRNA adenine N-6-methyltransferase (319 aa).

The disordered stretch occupies residues Met-1 to Ala-59. Over residues Arg-26–Pro-41 the composition is skewed to basic and acidic residues. Asn-66, Leu-68, Gly-93, Glu-114, Asp-141, and Asn-157 together coordinate S-adenosyl-L-methionine.

It belongs to the class I-like SAM-binding methyltransferase superfamily. rRNA adenine N(6)-methyltransferase family.

The enzyme catalyses adenosine(2085) in 23S rRNA + 2 S-adenosyl-L-methionine = N(6)-dimethyladenosine(2085) in 23S rRNA + 2 S-adenosyl-L-homocysteine + 2 H(+). In terms of biological role, this protein produces a dimethylation of the adenine residue at position 2085 in 23S rRNA, resulting in reduced affinity between ribosomes and macrolide-lincosamide-streptogramin B antibiotics. The chain is rRNA adenine N-6-methyltransferase (ermSF) from Streptomyces fradiae (Streptomyces roseoflavus).